The sequence spans 92 residues: PqqA binding protein (92 aa).

The protein belongs to the PqqD family. As to quaternary structure, monomer. Interacts with PqqE.

It participates in cofactor biosynthesis; pyrroloquinoline quinone biosynthesis. Functionally, functions as a PqqA binding protein and presents PqqA to PqqE, in the pyrroloquinoline quinone (PQQ) biosynthetic pathway. The polypeptide is PqqA binding protein (Azotobacter vinelandii (strain DJ / ATCC BAA-1303)).